The sequence spans 519 residues: Histidine--tRNA ligase (519 aa).

It belongs to the class-II aminoacyl-tRNA synthetase family. Homodimer.

The protein resides in the cytoplasm. The enzyme catalyses tRNA(His) + L-histidine + ATP = L-histidyl-tRNA(His) + AMP + diphosphate + H(+). The chain is Histidine--tRNA ligase from Rhodopseudomonas palustris (strain BisB18).